We begin with the raw amino-acid sequence, 405 residues long: MTIDRNALGFGVGERAIFAADPWNSRGRLYPEGGSLTRSDFQRDRDRIVHTTAFRRLKHKTQVFIGPDSDHYRTRLTHTIEVAQIARALARAFRIDEDLAEGVALVHDFGHTPFGHTGEDALHELLEPYGGFDHNAQSLRIVTKLERRYAEFDGLNLTWETLEGLVKHNGPLMNADGEGTRGPVPLPITEYCQMQDLDIASHASLEAQAAAVADDIAYNTHDIDDGLRSGYLTFDMLEDVPFLAGLMRDVRDRYPNLEADRFTHEIMRRQITRMVEDVIAVAQERLARIRPMSADDIRQAGETVITFSEGMAETDRQIKKLLFSKIYRHPDIMRIRAGAAQIVTDLFKAYMADPTLMRSDYWVEHTAGLETPAKARHVGDFLAGMTDTYAVRVHRQLFDHTPDLR.

Positions Arg75–Asn219 constitute an HD domain.

This sequence belongs to the dGTPase family. Type 2 subfamily.

The sequence is that of Deoxyguanosinetriphosphate triphosphohydrolase-like protein from Allorhizobium ampelinum (strain ATCC BAA-846 / DSM 112012 / S4) (Agrobacterium vitis (strain S4)).